Here is an 87-residue protein sequence, read N- to C-terminus: Beta-toxin Cn5 (87 aa).

Residues 1–19 form the signal peptide; it reads MNSLLMITACLFLIGTVWA. In terms of domain architecture, LCN-type CS-alpha/beta spans 20–85; that stretch reads KEGYLVNKST…TYPLPNKSCS (66 aa). 4 cysteine pairs are disulfide-bonded: Cys-31–Cys-84, Cys-35–Cys-60, Cys-44–Cys-65, and Cys-48–Cys-67.

It belongs to the long (4 C-C) scorpion toxin superfamily. Sodium channel inhibitor family. Beta subfamily. In terms of tissue distribution, expressed by the venom gland.

Its subcellular location is the secreted. Its function is as follows. Beta toxins bind voltage-independently at site-4 of sodium channels (Nav) and shift the voltage of activation toward more negative potentials thereby affecting sodium channel activation and promoting spontaneous and repetitive firing. This toxin is lethal to crustaceans (freshwater crayfish (Cambarellus montezumae spp.)), it provokes a reversible paralysis to insects (crickets (Achaeta spp.)), but is not toxic to mice. At high concentrations, it does displace the (beta) mammal-specific toxin Cn2 from rat brain synaptosomes. This is Beta-toxin Cn5 from Centruroides noxius (Mexican scorpion).